The chain runs to 259 residues: Ribonuclease HII (259 aa).

An RNase H type-2 domain is found at 72–259 (ERIAGIDEAG…PVREALGVQS (188 aa)). A divalent metal cation-binding residues include Asp-78, Glu-79, and Asp-170.

This sequence belongs to the RNase HII family. Mn(2+) serves as cofactor. Requires Mg(2+) as cofactor.

Its subcellular location is the cytoplasm. The catalysed reaction is Endonucleolytic cleavage to 5'-phosphomonoester.. Endonuclease that specifically degrades the RNA of RNA-DNA hybrids. This is Ribonuclease HII from Geobacillus thermodenitrificans (strain NG80-2).